A 196-amino-acid polypeptide reads, in one-letter code: Holliday junction branch migration complex subunit RuvA (196 aa).

Positions 1–63 are domain I; it reads MINKICGKIV…EDEIRLFGFL (63 aa). The interval 64 to 135 is domain II; the sequence is NVSEREVFEK…KLRGKLVKVN (72 aa). A flexible linker region spans residues 135–138; the sequence is NEAS. Positions 139 to 196 are domain III; it reads SGVLKFKELEQSIVNMGFDRKLVAAAIKEIMLIDEFLMLRQVDQEQFLFREILRKLSG.

The protein belongs to the RuvA family. As to quaternary structure, homotetramer. Forms an RuvA(8)-RuvB(12)-Holliday junction (HJ) complex. HJ DNA is sandwiched between 2 RuvA tetramers; dsDNA enters through RuvA and exits via RuvB. An RuvB hexamer assembles on each DNA strand where it exits the tetramer. Each RuvB hexamer is contacted by two RuvA subunits (via domain III) on 2 adjacent RuvB subunits; this complex drives branch migration. In the full resolvosome a probable DNA-RuvA(4)-RuvB(12)-RuvC(2) complex forms which resolves the HJ.

Its subcellular location is the cytoplasm. Functionally, the RuvA-RuvB-RuvC complex processes Holliday junction (HJ) DNA during genetic recombination and DNA repair, while the RuvA-RuvB complex plays an important role in the rescue of blocked DNA replication forks via replication fork reversal (RFR). RuvA specifically binds to HJ cruciform DNA, conferring on it an open structure. The RuvB hexamer acts as an ATP-dependent pump, pulling dsDNA into and through the RuvAB complex. HJ branch migration allows RuvC to scan DNA until it finds its consensus sequence, where it cleaves and resolves the cruciform DNA. The polypeptide is Holliday junction branch migration complex subunit RuvA (Borrelia turicatae (strain 91E135)).